Consider the following 670-residue polypeptide: Cyclic di-GMP phosphodiesterase PdeA (670 aa).

Positions 428–670 constitute an EAL domain; that stretch reads QNKIFQYILK…GFLWHKPEPI (243 aa).

The enzyme catalyses 3',3'-c-di-GMP + H2O = 5'-phosphoguanylyl(3'-&gt;5')guanosine + H(+). In terms of biological role, phosphodiesterase (PDE) that catalyzes the hydrolysis of cyclic diguanylate (c-di-GMP) to pGpG. In Borreliella burgdorferi (strain ATCC 35210 / DSM 4680 / CIP 102532 / B31) (Borrelia burgdorferi), this protein is Cyclic di-GMP phosphodiesterase PdeA.